Here is a 77-residue protein sequence, read N- to C-terminus: Acyl carrier protein (77 aa).

Residues 2-77 (SDIAARVKKI…DATKFISEAQ (76 aa)) enclose the Carrier domain. Ser-37 is subject to O-(pantetheine 4'-phosphoryl)serine.

It belongs to the acyl carrier protein (ACP) family. Post-translationally, 4'-phosphopantetheine is transferred from CoA to a specific serine of apo-ACP by AcpS. This modification is essential for activity because fatty acids are bound in thioester linkage to the sulfhydryl of the prosthetic group.

It localises to the cytoplasm. The protein operates within lipid metabolism; fatty acid biosynthesis. Its function is as follows. Carrier of the growing fatty acid chain in fatty acid biosynthesis. In Jannaschia sp. (strain CCS1), this protein is Acyl carrier protein.